Reading from the N-terminus, the 200-residue chain is Charged multivesicular body protein 6-B (200 aa).

Residue G2 is the site of N-myristoyl glycine attachment. Positions 9–102 form a coiled coil; sequence RRSRVTEQDK…FAQIEMKVIE (94 aa). Residues 165–200 form a disordered region; that stretch reads QEDLELPEAPSEPLSDTVPEKQAVKNRPKPQLVAAS. A Type-2 MIT-interacting motif motif is present at residues 168 to 179; the sequence is LELPEAPSEPLS.

It belongs to the SNF7 family. In terms of assembly, probable core component of the endosomal sorting required for transport complex III (ESCRT-III). ESCRT-III components are thought to multimerize to form a flat lattice on the perimeter membrane of the endosome.

It localises to the endomembrane system. The protein localises to the late endosome membrane. Functionally, probable core component of the endosomal sorting required for transport complex III (ESCRT-III) which is involved in multivesicular bodies (MVBs) formation and sorting of endosomal cargo proteins into MVBs. MVBs contain intraluminal vesicles (ILVs) that are generated by invagination and scission from the limiting membrane of the endosome and mostly are delivered to lysosomes enabling degradation of membrane proteins, such as stimulated growth factor receptors, lysosomal enzymes and lipids. In the ESCRT-III complex, it probably serves as an acceptor for the ESCRT-II complex on endosomal membranes. The protein is Charged multivesicular body protein 6-B (chmp6-b) of Xenopus laevis (African clawed frog).